The primary structure comprises 868 residues: mRNA-capping enzyme (868 aa).

The active-site N6-GMP-lysine intermediate is the Lys282. The mRNA cap 0 methyltransferase domain maps to 594 to 868; the sequence is GIYRAQTALI…LFGFICLRKN (275 aa). S-adenosyl-L-methionine is bound by residues Lys607, Gly624, Asp646, and 710–712; that span reads LFI.

The protein in the N-terminal section; belongs to the dsDNA virus mRNA guanylyltransferase family. This sequence in the C-terminal section; belongs to the class I-like SAM-binding methyltransferase superfamily. mRNA cap 0 methyltransferase family. Part of the viral DNA-directed RNA polymerase that consists of 8 polII-like subunits (RPB1, RPB2, RPB3, RPB5, RPB6, RPB7, RPB9, RPB10), a capping enzyme and a termination factor.

It localises to the virion. The enzyme catalyses a 5'-end triphospho-ribonucleoside in mRNA + H2O = a 5'-end diphospho-ribonucleoside in mRNA + phosphate + H(+). It catalyses the reaction a 5'-end diphospho-ribonucleoside in mRNA + GTP + H(+) = a 5'-end (5'-triphosphoguanosine)-ribonucleoside in mRNA + diphosphate. The catalysed reaction is a 5'-end (5'-triphosphoguanosine)-ribonucleoside in mRNA + S-adenosyl-L-methionine = a 5'-end (N(7)-methyl 5'-triphosphoguanosine)-ribonucleoside in mRNA + S-adenosyl-L-homocysteine. Its pathway is mRNA processing; mRNA capping. Its function is as follows. Probably catalyzes the second reaction in the mRNA cap formation pathway. Forms a covalent complex with GTP. This is mRNA-capping enzyme from Ornithodoros (relapsing fever ticks).